Reading from the N-terminus, the 154-residue chain is MKKKDILIVGCGNLLFGDDGFGCEVVSKLEKMNLPDNVEVIDAGASGAYYLMTLVDEDIKKIIVVDAIDFDLEPGTIKKIDVDELPNIKKYSFDAHNVPLAPFLKDLHNKGIEVVVIGCQGKEFTMPDIKPGLSEEVAKAVDKAIEIILGEIKK.

Belongs to the peptidase A31 family.

This chain is Putative hydrogenase maturation protease MJ0253, found in Methanocaldococcus jannaschii (strain ATCC 43067 / DSM 2661 / JAL-1 / JCM 10045 / NBRC 100440) (Methanococcus jannaschii).